We begin with the raw amino-acid sequence, 2134 residues long: Tudor domain-containing protein 6 (2134 aa).

The disordered stretch occupies residues 287–315; sequence RAPVGTDDEDSGSATWEEREESPDKPGSP. Thr-292 carries the phosphothreonine modification. Tudor domains are found at residues 309 to 368, 542 to 599, 820 to 879, and 1038 to 1092; these read PDKP…YFRM, RPEP…FRQL, YEGD…FFQV, and TLAP…AHDV. Residues 1271-1296 are disordered; it reads SPMSGTKLDSALPERRMGEPSGRDLP. Residues 1282–1296 are compositionally biased toward basic and acidic residues; the sequence is LPERRMGEPSGRDLP. Tudor domains lie at 1358-1417 and 1570-1630; these read QWQS…DAVL and CPQI…LLLV. Disordered regions lie at residues 1699–1733 and 1860–1885; these read KKYA…GLKK and LQHS…LSPG. A compositionally biased stretch (basic and acidic residues) spans 1711 to 1722; sequence LSSEKRGPERKG. A phosphoserine mark is found at Ser-1723 and Ser-1726. A Phosphoserine modification is found at Ser-1925. The span at 1930 to 1939 shows a compositional bias: polar residues; sequence AVSQDIQGSR. The interval 1930–1985 is disordered; that stretch reads AVSQDIQGSRCSEDERKAGYMGSSDDDHSRSPLLQHGKGGNSPAHDGRNLSEEEFP. Phosphoserine is present on residues Ser-1980, Ser-2063, and Ser-2115.

As to quaternary structure, found in a mRNP complex (i.e. messenger ribonucleoproteins which correspond to mRNA with bound proteins), at least composed of TDRD1, TDRD6, TDRD7 and DDX4. Found in a complex, at least composed of PIWIL1, PIWIL2, DDX4 and TDRD6. Interacts with Tex19.1 and probably Tex19.2. Interacts with PRMT5. Interacts with SNRPB (when methylated); to trigger spliceosome formation. Post-translationally, undergoes proteolytic cleavage near the C-terminal by an unknown protease during the transition from meiosis I to meiosis II in primary spermatocytes. Testis specific. Expressed in primary spermatocytes at post natal (PN) day 17.5. Expressed in midpachytene stage of primary spermatocytes at PN16 and in round spermatids at PN22 (at protein level).

Its subcellular location is the cytoplasm. In terms of biological role, tudor domain-containing protein involved in germ cell development, more specifically the formation of chromatoid body (during spermiogenesis), Balbiani body (during oogenesis), germ plasm (upon fertilization), and for proper miRNA expression and spliceosome maturation. Essential for RNA-dependent helicase UPF1 localization to chromatoid body, for UPF1-UPF2 and UPF1-DDX4 interactions which are required for mRNA degradation, using the extended 3' UTR-triggered nonsense-mediated mRNA decay (NMD) pathway. Involved in spliceosome maturation and mRNA splicing in prophase I spermatocytes through interaction with arginine N-methyltransferase PRMT5 and symmetrically arginine dimethylated SNRPB (small nuclear ribonucleoprotein-associated protein). The sequence is that of Tudor domain-containing protein 6 from Mus musculus (Mouse).